The following is a 277-amino-acid chain: Large ribosomal subunit protein uL2 (277 aa).

Positions 223–277 (VVMNPIDHPHGGGEGRTSGGRHPVTPWGKPTKGKKTRSNKSTNKFILISRHKRKK) are disordered.

This sequence belongs to the universal ribosomal protein uL2 family. As to quaternary structure, part of the 50S ribosomal subunit. Forms a bridge to the 30S subunit in the 70S ribosome.

Functionally, one of the primary rRNA binding proteins. Required for association of the 30S and 50S subunits to form the 70S ribosome, for tRNA binding and peptide bond formation. It has been suggested to have peptidyltransferase activity; this is somewhat controversial. Makes several contacts with the 16S rRNA in the 70S ribosome. The protein is Large ribosomal subunit protein uL2 of Nitrobacter hamburgensis (strain DSM 10229 / NCIMB 13809 / X14).